The sequence spans 158 residues: NAD(P)H-quinone oxidoreductase subunit J, chloroplastic (158 aa).

This sequence belongs to the complex I 30 kDa subunit family. NDH is composed of at least 16 different subunits, 5 of which are encoded in the nucleus.

The protein resides in the plastid. The protein localises to the chloroplast thylakoid membrane. The catalysed reaction is a plastoquinone + NADH + (n+1) H(+)(in) = a plastoquinol + NAD(+) + n H(+)(out). The enzyme catalyses a plastoquinone + NADPH + (n+1) H(+)(in) = a plastoquinol + NADP(+) + n H(+)(out). In terms of biological role, NDH shuttles electrons from NAD(P)H:plastoquinone, via FMN and iron-sulfur (Fe-S) centers, to quinones in the photosynthetic chain and possibly in a chloroplast respiratory chain. The immediate electron acceptor for the enzyme in this species is believed to be plastoquinone. Couples the redox reaction to proton translocation, and thus conserves the redox energy in a proton gradient. The sequence is that of NAD(P)H-quinone oxidoreductase subunit J, chloroplastic from Gossypium barbadense (Sea Island cotton).